A 61-amino-acid chain; its full sequence is Beta-insect depressant toxin BmKIT2 (61 aa).

One can recognise an LCN-type CS-alpha/beta domain in the interval 1 to 61 (DGYIKGKSGC…TWKSESNTCG (61 aa)). Intrachain disulfides connect C10/C60, C14/C35, C21/C42, and C25/C44. G61 is modified (glycine amide).

This sequence belongs to the long (4 C-C) scorpion toxin superfamily. Sodium channel inhibitor family. Beta subfamily. Expressed by the venom gland.

The protein resides in the secreted. In terms of biological role, on insects, this depressant beta-toxins cause a transient contraction paralysis followed by a slow flaccid paralysis. They bind voltage-independently at site-4 of sodium channels (Nav) and shift the voltage of activation toward more negative potentials thereby affecting sodium channel activation and promoting spontaneous and repetitive firing. This toxin is active against insects and mammals. It is capable of binding to not only cockroach neuronal membranes, but also rat cerebrocortical and hippocampal synaptosomes. This toxin also has potent peripheral and central suppressive effects on rat nociceptive spontaneous responses, thermal hyperalgesia and spinal c-Fos expression induced by formalin and carrageenan, which may be derived from its modulation on the activity of sodium channels of the neurons. Administration of BmKIT2 into rat brain can also suppress the epileptic seizures significantly. This is Beta-insect depressant toxin BmKIT2 from Olivierus martensii (Manchurian scorpion).